The chain runs to 368 residues: Peptide chain release factor 2 (368 aa).

Q250 bears the N5-methylglutamine mark.

Belongs to the prokaryotic/mitochondrial release factor family. Post-translationally, methylated by PrmC. Methylation increases the termination efficiency of RF2.

Its subcellular location is the cytoplasm. Functionally, peptide chain release factor 2 directs the termination of translation in response to the peptide chain termination codons UGA and UAA. This is Peptide chain release factor 2 from Chlamydia trachomatis serovar L2b (strain UCH-1/proctitis).